Here is a 133-residue protein sequence, read N- to C-terminus: Small ribosomal subunit protein uS8 (133 aa).

It belongs to the universal ribosomal protein uS8 family. In terms of assembly, part of the 30S ribosomal subunit. Contacts proteins S5 and S12.

In terms of biological role, one of the primary rRNA binding proteins, it binds directly to 16S rRNA central domain where it helps coordinate assembly of the platform of the 30S subunit. This chain is Small ribosomal subunit protein uS8, found in Chlamydia trachomatis serovar L2b (strain UCH-1/proctitis).